The primary structure comprises 223 residues: Chorismate dehydratase (223 aa).

Belongs to the MqnA/MqnD family. MqnA subfamily.

The catalysed reaction is chorismate = 3-[(1-carboxyvinyl)-oxy]benzoate + H2O. The protein operates within quinol/quinone metabolism; menaquinone biosynthesis. Catalyzes the dehydration of chorismate into 3-[(1-carboxyvinyl)oxy]benzoate, a step in the biosynthesis of menaquinone (MK, vitamin K2). The protein is Chorismate dehydratase of Campylobacter jejuni subsp. jejuni serotype O:23/36 (strain 81-176).